We begin with the raw amino-acid sequence, 517 residues long: Sphingolipid C9-methyltransferase A (517 aa).

The next 2 helical transmembrane spans lie at 58–78 (LLIL…GGGL) and 80–100 (TTIF…WSIA). S-adenosyl-L-methionine contacts are provided by residues 223-224 (YT), 286-291 (TLGRNQ), and 316-317 (YR). Asn290 is a glycosylation site (N-linked (GlcNAc...) asparagine). Residue Asn478 is glycosylated (N-linked (GlcNAc...) asparagine).

This sequence belongs to the CFA/CMAS family.

Its subcellular location is the membrane. The catalysed reaction is a (4E,8E)-4-sphinga-4,8-dienine ceramide + S-adenosyl-L-methionine = a 9-methyl-(4E,8E)-sphinga-4,8-dienine ceramide + S-adenosyl-L-homocysteine + H(+). It functions in the pathway lipid metabolism; sphingolipid metabolism. Catalyzes methylation of the sphingoid base component of glucosylceramides (GluCers) at the C9-position. Sphingolipid C9-methylation requires 4,8-desaturated ceramides as substrates. Glucosylceramides play important roles in growth, differentiation and pathogenicity. The methyl group at the C9-position distinguishes fungal glucosylceramides from those of plants and animals and may thus play a role in host-pathogen interactions enabling the host to recognize the fungal attack and initiate specific defense responses. The sequence is that of Sphingolipid C9-methyltransferase A from Emericella nidulans (strain FGSC A4 / ATCC 38163 / CBS 112.46 / NRRL 194 / M139) (Aspergillus nidulans).